Reading from the N-terminus, the 400-residue chain is Cytoplasmic tRNA 2-thiolation protein 2 (400 aa).

The protein belongs to the CTU2/NCS2 family.

The protein resides in the cytoplasm. It functions in the pathway tRNA modification; 5-methoxycarbonylmethyl-2-thiouridine-tRNA biosynthesis. Its function is as follows. Plays a central role in 2-thiolation of mcm(5)S(2)U at tRNA wobble positions of tRNA(Lys), tRNA(Glu) and tRNA(Gln). May act by forming a heterodimer with NCS6/CTU1 that ligates sulfur from thiocarboxylated URM1 onto the uridine of tRNAs at wobble position. This chain is Cytoplasmic tRNA 2-thiolation protein 2, found in Drosophila virilis (Fruit fly).